We begin with the raw amino-acid sequence, 67 residues long: DNA-directed RNA polymerase subunit omega (67 aa).

It belongs to the RNA polymerase subunit omega family. The RNAP catalytic core consists of 2 alpha, 1 beta, 1 beta' and 1 omega subunit. When a sigma factor is associated with the core the holoenzyme is formed, which can initiate transcription.

The enzyme catalyses RNA(n) + a ribonucleoside 5'-triphosphate = RNA(n+1) + diphosphate. Functionally, promotes RNA polymerase assembly. Latches the N- and C-terminal regions of the beta' subunit thereby facilitating its interaction with the beta and alpha subunits. This Polaromonas sp. (strain JS666 / ATCC BAA-500) protein is DNA-directed RNA polymerase subunit omega.